A 321-amino-acid chain; its full sequence is 26S proteasome non-ATPase regulatory subunit 7 (321 aa).

The MPN domain maps to 9–144; sequence VVVHPLVLLS…TEAYISVEEV (136 aa). Lysine 180 is covalently cross-linked (Glycyl lysine isopeptide (Lys-Gly) (interchain with G-Cter in ubiquitin)). An N6-acetyllysine mark is found at lysine 204, lysine 214, lysine 313, and lysine 314. The segment at 281–321 is disordered; it reads ANRDAEKKEGQEKEESKKERKDDKEKEKSDAAKKEEKKEKK.

Belongs to the peptidase M67A family. Component of the 19S proteasome regulatory particle complex. The 26S proteasome consists of a 20S core particle (CP) and two 19S regulatory subunits (RP). The regulatory particle is made of a lid composed of 9 subunits including PSMD7, a base containing 6 ATPases and few additional components. Within the complex, PSMD7 interacts with subunit PSMD4 through their respective MPN domain. Interacts with TRIM5.

In terms of biological role, component of the 26S proteasome, a multiprotein complex involved in the ATP-dependent degradation of ubiquitinated proteins. This complex plays a key role in the maintenance of protein homeostasis by removing misfolded or damaged proteins, which could impair cellular functions, and by removing proteins whose functions are no longer required. Therefore, the proteasome participates in numerous cellular processes, including cell cycle progression, apoptosis, or DNA damage repair. In Mus musculus (Mouse), this protein is 26S proteasome non-ATPase regulatory subunit 7 (Psmd7).